We begin with the raw amino-acid sequence, 251 residues long: BRI3-binding protein (251 aa).

A run of 4 helical transmembrane segments spans residues 13 to 33 (AGLLLLLLLLLLLGLLAPGAQ), 125 to 145 (ALLLVGVVLLAYWFLSLTLGF), 146 to 166 (TFSVLHVVFGRFFWIVRVVLF), and 185 to 205 (VLPLCFVVAVYFMTGPMGFYW). Residues 217–247 (NPSVEEKLEHLEKQVRLLNIRLNRVLESLDR) are a coiled coil. N6-acetyllysine is present on Lys-229. The residue at position 248 (Ser-248) is a Phosphoserine.

In terms of assembly, interacts with LETMD1. Interacts with BRI3 (isoforms 1 and 2); the interaction with isoform 2 is weaker than with isoform 1. Interacts with BRI3; the interaction is weak. Interacts with TMEM238L. In terms of tissue distribution, most abundantly expressed in brain, liver and kidney. Overexpressed in leukemia and lymphoma cell lines, as well as in various carcinomas.

It is found in the mitochondrion outer membrane. In terms of biological role, involved in tumorigenesis and may function by stabilizing p53/TP53. This Homo sapiens (Human) protein is BRI3-binding protein.